Consider the following 171-residue polypeptide: 16S rRNA aminocarboxypropyltransferase (171 aa).

4 residues coordinate S-adenosyl-L-methionine: T18, L68, L91, and S110.

This sequence belongs to the TDD superfamily. TSR3 family.

Its subcellular location is the cytoplasm. The catalysed reaction is an N(1)-methylpseudouridine in rRNA + S-adenosyl-L-methionine = N(1)-methyl-N(3)-[(3S)-3-amino-3-carboxypropyl]pseudouridine in rRNA + S-methyl-5'-thioadenosine + H(+). Functionally, aminocarboxypropyltransferase that catalyzes the aminocarboxypropyl transfer on pseudouridine corresponding to position 914 in M.jannaschii 16S rRNA. It constitutes the last step in biosynthesis of the hypermodified N1-methyl-N3-(3-amino-3-carboxypropyl) pseudouridine (m1acp3-Psi). In Methanosphaera stadtmanae (strain ATCC 43021 / DSM 3091 / JCM 11832 / MCB-3), this protein is 16S rRNA aminocarboxypropyltransferase.